We begin with the raw amino-acid sequence, 206 residues long: Ribosomal RNA large subunit methyltransferase E (206 aa).

Residues Gly-60, Trp-62, Asp-80, Asp-96, and Asp-121 each coordinate S-adenosyl-L-methionine. Lys-161 functions as the Proton acceptor in the catalytic mechanism.

This sequence belongs to the class I-like SAM-binding methyltransferase superfamily. RNA methyltransferase RlmE family.

It localises to the cytoplasm. It catalyses the reaction uridine(2552) in 23S rRNA + S-adenosyl-L-methionine = 2'-O-methyluridine(2552) in 23S rRNA + S-adenosyl-L-homocysteine + H(+). Specifically methylates the uridine in position 2552 of 23S rRNA at the 2'-O position of the ribose in the fully assembled 50S ribosomal subunit. In Nitrosomonas eutropha (strain DSM 101675 / C91 / Nm57), this protein is Ribosomal RNA large subunit methyltransferase E.